An 84-amino-acid polypeptide reads, in one-letter code: Large ribosomal subunit protein bL27 (84 aa).

The disordered stretch occupies residues 1-22 (MAHKKAGGSTRNGRDSESKRLG).

Belongs to the bacterial ribosomal protein bL27 family.

This Shewanella sp. (strain MR-4) protein is Large ribosomal subunit protein bL27.